The sequence spans 259 residues: Ribosomal RNA small subunit methyltransferase J (259 aa).

S-adenosyl-L-methionine is bound by residues 101–102 (RD), 117–118 (ER), 153–154 (SS), and aspartate 176.

Belongs to the methyltransferase superfamily. RsmJ family.

The protein localises to the cytoplasm. The enzyme catalyses guanosine(1516) in 16S rRNA + S-adenosyl-L-methionine = N(2)-methylguanosine(1516) in 16S rRNA + S-adenosyl-L-homocysteine + H(+). Specifically methylates the guanosine in position 1516 of 16S rRNA. This Aliivibrio fischeri (strain ATCC 700601 / ES114) (Vibrio fischeri) protein is Ribosomal RNA small subunit methyltransferase J.